Here is a 114-residue protein sequence, read N- to C-terminus: Period circadian protein (114 aa).

A disordered region spans residues 23–114; sequence VTNTSIAGTG…VTLTESLLNK (92 aa). 14 repeat units span residues 30-31, 33-34, 36-37, 38-39, 40-41, 42-43, 44-45, 46-47, 48-49, 50-51, 52-53, 54-55, 56-57, and 58-59. A compositionally biased stretch (gly residues) spans 30-79; it reads GTGGTGGTGTGTGTGTGTGTGTGTGTGTGTDTGTGTGTGTETGTGTGTGT. Residues 30 to 87 are 28 X 2 AA approximate tandem repeats of G-[TN]; that stretch reads GTGGTGGTGTGTGTGTGTGTGTGTGTGTGTDTGTGTGTGTETGTGTGTGTRNGTNSGT. The 15; approximate repeat unit spans residues 60–61; that stretch reads DT. A run of 4 repeats spans residues 62–63, 64–65, 66–67, and 68–69. The stretch at 70 to 71 is one 20; approximate repeat; the sequence is ET. Tandem repeats lie at residues 72-73, 74-75, 76-77, and 78-79. A 25; approximate repeat occupies 80–81; it reads RN. A compositionally biased stretch (low complexity) spans 80–91; it reads RNGTNSGTKTGT. Repeat unit 26 spans residues 82 to 83; the sequence is GT. Residues 84-85 form a 27; approximate repeat; the sequence is NS. The stretch at 86–87 is repeat 28; the sequence is GT. Residues 105–114 show a composition bias toward polar residues; the sequence is VTLTESLLNK.

Forms a heterodimer with timeless (TIM); the complex then translocates into the nucleus. Phosphorylated with a circadian rhythmicity, probably by the double-time protein (dbt). Phosphorylation could be implicated in the stability of per monomer and in the formation of heterodimer per-tim.

Its subcellular location is the nucleus. It localises to the cytoplasm. It is found in the perinuclear region. In terms of biological role, essential for biological clock functions. Determines the period length of circadian and ultradian rhythms; an increase in PER dosage leads to shortened circadian rhythms and a decrease leads to lengthened circadian rhythms. Essential for the circadian rhythmicity of locomotor activity, eclosion behavior, and for the rhythmic component of the male courtship song that originates in the thoracic nervous system. The biological cycle depends on the rhythmic formation and nuclear localization of the TIM-PER complex. Light induces the degradation of TIM, which promotes elimination of PER. Nuclear activity of the heterodimer coordinatively regulates PER and TIM transcription through a negative feedback loop. Behaves as a negative element in circadian transcriptional loop. Does not appear to bind DNA, suggesting indirect transcriptional inhibition. The chain is Period circadian protein (per) from Drosophila orena (Fruit fly).